Here is a 196-residue protein sequence, read N- to C-terminus: Transcriptional regulatory protein UhpA (196 aa).

The Response regulatory domain maps to 3-116; that stretch reads TVALIDDHLI…ELIAAVHTVA (114 aa). Asp54 bears the 4-aspartylphosphate mark. The 66-residue stretch at 131 to 196 folds into the HTH luxR-type domain; it reads AAGRQDPLTK…ELAHRMFDGW (66 aa). Positions 155–174 form a DNA-binding region, H-T-H motif; that stretch reads VKEIAAELGLSPKTVHVHRA.

Phosphorylated and dephosphorylated by UhpB.

It localises to the cytoplasm. Its function is as follows. Part of the UhpABC signaling cascade that controls the expression of the hexose phosphate transporter UhpT. Activates the transcription of the uhpT gene. Acts by binding specifically to the uhpT promoter region. The protein is Transcriptional regulatory protein UhpA (uhpA) of Salmonella typhimurium (strain LT2 / SGSC1412 / ATCC 700720).